Reading from the N-terminus, the 254-residue chain is GTP cyclohydrolase 1 type 2 homolog (254 aa).

Positions 68, 69, 106, 222, and 226 each coordinate a divalent metal cation.

This sequence belongs to the GTP cyclohydrolase I type 2/NIF3 family. In terms of assembly, homohexamer.

This Allochromatium vinosum (strain ATCC 17899 / DSM 180 / NBRC 103801 / NCIMB 10441 / D) (Chromatium vinosum) protein is GTP cyclohydrolase 1 type 2 homolog.